The sequence spans 319 residues: Olfactory receptor 8U8 (319 aa).

The Extracellular segment spans residues 1-28; the sequence is MAHINCTQATEFILVGLTDHQELKMPLF. An N-linked (GlcNAc...) asparagine glycan is attached at asparagine 5. A helical transmembrane segment spans residues 29–49; the sequence is VLFLSIYLFTVVGNLGLILLI. The Cytoplasmic segment spans residues 50 to 56; sequence RADTSLN. Residues 57–77 form a helical membrane-spanning segment; it reads TPMYFFLSNLAFVDFCYSSVI. Residues 78–97 lie on the Extracellular side of the membrane; that stretch reads TPKMLGNFLYKQNVISFDAC. A disulfide bridge connects residues cysteine 97 and cysteine 179. Residues 98-118 traverse the membrane as a helical segment; sequence ATQLGCFLTFMVSESLLLASM. The Cytoplasmic segment spans residues 119 to 122; it reads AYDR. Residues 123–143 form a helical membrane-spanning segment; it reads YVAICNPLLYMVVMTPGICIQ. Residues 144–204 are Extracellular-facing; the sequence is LVAVPYSYSF…KQLWILACAG (61 aa). Residues 205–225 traverse the membrane as a helical segment; the sequence is ITFICSVLIVFVSYMFIIFAI. At 226-239 the chain is on the cytoplasmic side; it reads LRMSSAEGRRKAFS. Residues 240-260 traverse the membrane as a helical segment; sequence TCSSHMLAVTIFYGTLIFMYL. The Extracellular portion of the chain corresponds to 261 to 271; sequence QPSSSHSLDAD. Residues 272 to 292 form a helical membrane-spanning segment; the sequence is KMASVFYTVIIPMLNPLIYSL. The Cytoplasmic segment spans residues 293-319; the sequence is RNKDVKDALKKVIINRNHAFIFLKLRK.

Belongs to the G-protein coupled receptor 1 family.

The protein localises to the cell membrane. Functionally, odorant receptor. In Homo sapiens (Human), this protein is Olfactory receptor 8U8 (OR8U8).